The primary structure comprises 70 residues: ATP synthase subunit c (70 aa).

Transmembrane regions (helical) follow at residues 4-24 and 47-67; these read IAAGIAAGLAAVGAGVGNGLV and FLGVGLIEALPILSIVIAFLV.

It belongs to the ATPase C chain family. In terms of assembly, F-type ATPases have 2 components, F(1) - the catalytic core - and F(0) - the membrane proton channel. F(1) has five subunits: alpha(3), beta(3), gamma(1), delta(1), epsilon(1). F(0) has three main subunits: a(1), b(2) and c(10-14). The alpha and beta chains form an alternating ring which encloses part of the gamma chain. F(1) is attached to F(0) by a central stalk formed by the gamma and epsilon chains, while a peripheral stalk is formed by the delta and b chains.

It localises to the cell membrane. Functionally, f(1)F(0) ATP synthase produces ATP from ADP in the presence of a proton or sodium gradient. F-type ATPases consist of two structural domains, F(1) containing the extramembraneous catalytic core and F(0) containing the membrane proton channel, linked together by a central stalk and a peripheral stalk. During catalysis, ATP synthesis in the catalytic domain of F(1) is coupled via a rotary mechanism of the central stalk subunits to proton translocation. Its function is as follows. Key component of the F(0) channel; it plays a direct role in translocation across the membrane. A homomeric c-ring of between 10-14 subunits forms the central stalk rotor element with the F(1) delta and epsilon subunits. This is ATP synthase subunit c from Limosilactobacillus fermentum (strain NBRC 3956 / LMG 18251) (Lactobacillus fermentum).